Consider the following 186-residue polypeptide: Homeobox expressed in ES cells 1 (186 aa).

The segment at residues 109 to 168 is a DNA-binding region (homeobox); it reads GRRPRTAFTRSQIEILENVFRVNSYPGIDIREELAGKLALDEDRIQIWFQNRRAKLKRSH.

This sequence belongs to the ANF homeobox family. In terms of assembly, interacts (via N-terminus) with zyx.

Its subcellular location is the nucleus. Regulates the earliest stages of development of the anterior neural plate. Plays a role in forebrain development by inhibiting the expression of otx2 and pax6 in the rostral region of the anterior neural plate. Necessary for both neural differentiation and neural patterning. Controls Spemann organizer development. May act as a transcriptional repressor. This Xenopus tropicalis (Western clawed frog) protein is Homeobox expressed in ES cells 1.